The sequence spans 128 residues: Large ribosomal subunit protein bL12 (128 aa).

It belongs to the bacterial ribosomal protein bL12 family. In terms of assembly, homodimer. Part of the ribosomal stalk of the 50S ribosomal subunit. Forms a multimeric L10(L12)X complex, where L10 forms an elongated spine to which 2 to 4 L12 dimers bind in a sequential fashion. Binds GTP-bound translation factors.

Its function is as follows. Forms part of the ribosomal stalk which helps the ribosome interact with GTP-bound translation factors. Is thus essential for accurate translation. The sequence is that of Large ribosomal subunit protein bL12 from Corynebacterium jeikeium (strain K411).